Here is a 63-residue protein sequence, read N- to C-terminus: Large ribosomal subunit protein bL28 (63 aa).

It belongs to the bacterial ribosomal protein bL28 family.

The protein is Large ribosomal subunit protein bL28 of Desulfatibacillum aliphaticivorans.